Here is a 40-residue protein sequence, read N- to C-terminus: Photosystem II reaction center protein J (40 aa).

Residues 8–28 (IPLWLVGTVTGTLVIGLMGIF) traverse the membrane as a helical segment.

Belongs to the PsbJ family. PSII is composed of 1 copy each of membrane proteins PsbA, PsbB, PsbC, PsbD, PsbE, PsbF, PsbH, PsbI, PsbJ, PsbK, PsbL, PsbM, PsbT, PsbX, PsbY, PsbZ, Psb30/Ycf12, at least 3 peripheral proteins of the oxygen-evolving complex and a large number of cofactors. It forms dimeric complexes.

It is found in the plastid. The protein resides in the chloroplast thylakoid membrane. Functionally, one of the components of the core complex of photosystem II (PSII). PSII is a light-driven water:plastoquinone oxidoreductase that uses light energy to abstract electrons from H(2)O, generating O(2) and a proton gradient subsequently used for ATP formation. It consists of a core antenna complex that captures photons, and an electron transfer chain that converts photonic excitation into a charge separation. This Psilotum nudum (Whisk fern) protein is Photosystem II reaction center protein J.